We begin with the raw amino-acid sequence, 230 residues long: Ureidoacrylate amidohydrolase RutB (230 aa).

Catalysis depends on aspartate 24, which acts as the Proton acceptor. Lysine 133 is a catalytic residue. Residue cysteine 166 is the Nucleophile of the active site.

It belongs to the isochorismatase family. RutB subfamily.

It catalyses the reaction (Z)-3-ureidoacrylate + H2O + H(+) = (Z)-3-aminoacrylate + NH4(+) + CO2. The enzyme catalyses (Z)-3-ureidoacrylate + H2O = (Z)-3-aminoacrylate + carbamate + H(+). The catalysed reaction is (Z)-2-methylureidoacrylate + H2O + H(+) = (Z)-2-methylaminoacrylate + NH4(+) + CO2. Functionally, hydrolyzes ureidoacrylate to form aminoacrylate and carbamate. The carbamate hydrolyzes spontaneously, thereby releasing one of the nitrogen atoms of the pyrimidine ring as ammonia and one of its carbon atoms as CO2. In Escherichia coli O111:H- (strain 11128 / EHEC), this protein is Ureidoacrylate amidohydrolase RutB.